Reading from the N-terminus, the 333-residue chain is B3 domain-containing transcription factor NGA4 (333 aa).

Positions F36–R145 form a DNA-binding region, TF-B3. The tract at residues V268–L333 is disordered. Over residues E323 to L333 the composition is skewed to basic and acidic residues.

It is found in the nucleus. In terms of biological role, regulates lateral organ growth. Functionally redundant with NGA1, NGA2 and NGA3. This is B3 domain-containing transcription factor NGA4 (NGA4) from Arabidopsis thaliana (Mouse-ear cress).